Consider the following 939-residue polypeptide: Intimin (939 aa).

The signal sequence occupies residues M1–G41. The peptidoglycan-binding stretch occupies residues N40 to T153. The segment at N40 to T153 is sufficient for homodimerization. The interval N40–T212 is required for periplasmic localization. Residues L63–L112 form the LysM domain. Residues D189 to L430 are inverse autotransporter. The signature sequence for beta-barrel assembly machinery (BAM), which recognizes the unfolded beta-barrel in the periplasm stretch occupies residues L402–F411. Big-1 domains are found at residues V560 to V653 and I660 to F751. The interval F750–K939 is required and sufficient for interaction with intimin receptor Tir. A C-type lectin domain region spans residues L842–K939. Residues L842–K939 are intimin receptor Tir-binding. A disulfide bridge links C860 with C937.

Belongs to the intimin/invasin family. In terms of assembly, homodimer. Interacts with Tir.

The protein localises to the cell outer membrane. An inverse autotransporter. Adhesin, which mediates attachment to the human intestine epithelial cells. Necessary for the production of attaching and effacing lesions on infected human tissue culture cells. Anchored to the outer membrane by binding to peptidoglycan (PGN) via its periplasmic domain, thus helping in receptor interactions during host invasion. PGN-binding may also aid in resisting mechanical and chemical stress during transit of the bacterium through the gastrointestinal tract of the host. Periplasmic domain binds purified E.coli PGN sacculi under acidic conditions in vitro and in vivo, but does not bind to chitin. Periplasmic domain binds PGN sacculi with an apparent dissociation constant (Kd) of 0.8 uM. No binding to PGN in vitro at normal physiological pH 7.4. This chain is Intimin, found in Escherichia coli O127:H6 (strain E2348/69 / EPEC).